Here is a 236-residue protein sequence, read N- to C-terminus: Orotidine 5'-phosphate decarboxylase (236 aa).

Substrate-binding positions include Asp-16, Lys-38, 65 to 74 (DLKYHDIPNT), Thr-124, Arg-185, Gln-194, Gly-214, and Arg-215. Lys-67 functions as the Proton donor in the catalytic mechanism.

This sequence belongs to the OMP decarboxylase family. Type 1 subfamily. As to quaternary structure, homodimer.

The enzyme catalyses orotidine 5'-phosphate + H(+) = UMP + CO2. It participates in pyrimidine metabolism; UMP biosynthesis via de novo pathway; UMP from orotate: step 2/2. Functionally, catalyzes the decarboxylation of orotidine 5'-monophosphate (OMP) to uridine 5'-monophosphate (UMP). The polypeptide is Orotidine 5'-phosphate decarboxylase (Hydrogenovibrio crunogenus (strain DSM 25203 / XCL-2) (Thiomicrospira crunogena)).